A 377-amino-acid chain; its full sequence is Histone deacetylase 8 (377 aa).

Positions Arg-5–Lys-336 are histone deacetylase. The active-site Proton donor/acceptor is His-145. Positions 182, 184, and 274 each coordinate Zn(2+).

It belongs to the histone deacetylase family. It depends on Zn(2+) as a cofactor. Expressed in stems, leaves, flowers, siliques and mature seeds.

It is found in the nucleus. It localises to the cytoplasm. The catalysed reaction is N(6)-acetyl-L-lysyl-[histone] + H2O = L-lysyl-[histone] + acetate. Its function is as follows. Responsible for the deacetylation of lysine residues on the N-terminal part of the core histones (H2A, H2B, H3 and H4). Histone deacetylation gives a tag for epigenetic repression and plays an important role in transcriptional regulation, cell cycle progression and developmental events. Histone deacetylases act via the formation of large multiprotein complexes. In Arabidopsis thaliana (Mouse-ear cress), this protein is Histone deacetylase 8.